The sequence spans 389 residues: Homoserine O-acetyltransferase (389 aa).

The segment at M1–L21 is disordered. Residues K8 to S18 show a composition bias toward polar residues. Residues N56–D366 enclose the AB hydrolase-1 domain. The active-site Nucleophile is the S161. Position 231 (R231) interacts with substrate. Catalysis depends on residues D327 and H360. D361 contributes to the substrate binding site.

It belongs to the AB hydrolase superfamily. MetX family. In terms of assembly, homodimer.

It is found in the cytoplasm. It catalyses the reaction L-homoserine + acetyl-CoA = O-acetyl-L-homoserine + CoA. The protein operates within amino-acid biosynthesis; L-methionine biosynthesis via de novo pathway; O-acetyl-L-homoserine from L-homoserine: step 1/1. Transfers an acetyl group from acetyl-CoA to L-homoserine, forming acetyl-L-homoserine. The chain is Homoserine O-acetyltransferase from Mesorhizobium japonicum (strain LMG 29417 / CECT 9101 / MAFF 303099) (Mesorhizobium loti (strain MAFF 303099)).